A 459-amino-acid chain; its full sequence is Zeatin O-glucosyltransferase (459 aa).

His-26 (proton acceptor) is an active-site residue. Residue His-26 coordinates an anthocyanidin. Asp-125 functions as the Charge relay in the catalytic mechanism. 10 residues coordinate UDP-alpha-D-glucose: Ser-148, Ala-335, Gln-337, His-352, Trp-355, Asn-356, Ser-357, Glu-360, Asp-376, and Gln-377.

Belongs to the UDP-glycosyltransferase family.

The catalysed reaction is trans-zeatin + UDP-alpha-D-glucose = O-beta-D-glucosyl-trans-zeatin + UDP + H(+). Functionally, may regulate active versus storage forms of cytokinins, and could have an impact on seed growth. Can also use UDP-xylose to catalyze the formation of O-xylosylzeatin but at much lower affinity. This Phaseolus lunatus (Lima bean) protein is Zeatin O-glucosyltransferase.